Here is a 295-residue protein sequence, read N- to C-terminus: Tyrosine recombinase XerC (295 aa).

A Core-binding (CB) domain is found at 1–85; it reads MHILLQKYYN…ALRQFLNYLV (85 aa). The Tyr recombinase domain maps to 106–285; sequence YLPKNMDMEQ…DFQHLAQVYD (180 aa). Residues Arg-145, Lys-169, His-237, Arg-240, and His-263 contribute to the active site. Catalysis depends on Tyr-272, which acts as the O-(3'-phospho-DNA)-tyrosine intermediate.

The protein belongs to the 'phage' integrase family. XerC subfamily. In terms of assembly, forms a cyclic heterotetrameric complex composed of two molecules of XerC and two molecules of XerD.

It is found in the cytoplasm. Site-specific tyrosine recombinase, which acts by catalyzing the cutting and rejoining of the recombining DNA molecules. The XerC-XerD complex is essential to convert dimers of the bacterial chromosome into monomers to permit their segregation at cell division. It also contributes to the segregational stability of plasmids. The chain is Tyrosine recombinase XerC from Histophilus somni (strain 2336) (Haemophilus somnus).